The following is a 277-amino-acid chain: Uridine phosphorylase (277 aa).

It belongs to the PNP/UDP phosphorylase family.

It localises to the cytoplasm. The enzyme catalyses uridine + phosphate = alpha-D-ribose 1-phosphate + uracil. It participates in pyrimidine metabolism; UMP biosynthesis via salvage pathway; uracil from uridine (phosphorylase route): step 1/1. Functionally, catalyzes the reversible phosphorylytic cleavage of uridine to uracil and ribose-1-phosphate. This is Uridine phosphorylase from Thermococcus kodakarensis (strain ATCC BAA-918 / JCM 12380 / KOD1) (Pyrococcus kodakaraensis (strain KOD1)).